The sequence spans 128 residues: Flagellar basal body rod protein FlgB (128 aa).

The protein belongs to the flagella basal body rod proteins family. The basal body constitutes a major portion of the flagellar organelle and consists of a number of rings mounted on a central rod. In Gram-negative bacteria, at least four rings, L, P, S and M are present, whereas Gram-positive bacteria lack the L and P rings. The rod consists of about 26 subunits of FlgG in the distal portion, and FlgB, FlgC and FlgF build up the proximal portion of the rod with about 6 subunits each. Rod assembly occurs by export via the flagellum-specific pathway of its constituent proteins and by their incorporation into the rod structure in the probable order of FlgB, FlgC, FlgF and FlgG. Another protein, FliE, also assembles onto the stable rod structure.

It is found in the bacterial flagellum basal body. Structural component of flagellum, the bacterial motility apparatus. Part of the rod structure of flagellar basal body. The sequence is that of Flagellar basal body rod protein FlgB from Cereibacter sphaeroides (strain ATCC 17029 / ATH 2.4.9) (Rhodobacter sphaeroides).